The chain runs to 451 residues: Tol-Pal system protein TolB 1 (451 aa).

An N-terminal signal peptide occupies residues 1–19 (MTLRMLFAFALLAAAPAQA). Over residues 18–29 (QAQQTEPQPAEE) the composition is skewed to low complexity. Disordered regions lie at residues 18 to 37 (QAQQ…GTVS) and 431 to 451 (NERR…PLLP).

It belongs to the TolB family. As to quaternary structure, the Tol-Pal system is composed of five core proteins: the inner membrane proteins TolA, TolQ and TolR, the periplasmic protein TolB and the outer membrane protein Pal. They form a network linking the inner and outer membranes and the peptidoglycan layer.

Its subcellular location is the periplasm. Functionally, part of the Tol-Pal system, which plays a role in outer membrane invagination during cell division and is important for maintaining outer membrane integrity. This Novosphingobium aromaticivorans (strain ATCC 700278 / DSM 12444 / CCUG 56034 / CIP 105152 / NBRC 16084 / F199) protein is Tol-Pal system protein TolB 1.